The chain runs to 366 residues: 8-hydroxyquercetin 8-O-methyltransferase (366 aa).

Residues 207–210, 231–232, 251–252, and lysine 265 contribute to the S-adenosyl-L-methionine site; these read VGGG, DL, and DM. Histidine 269 serves as the catalytic Proton acceptor.

It belongs to the class I-like SAM-binding methyltransferase superfamily. Cation-independent O-methyltransferase family. COMT subfamily. In terms of assembly, homodimer.

The enzyme catalyses 3,3',4',5,7,8-hexahydroxyflavone + S-adenosyl-L-methionine = 3,3',4',5,7-pentahydroxy-8-methoxyflavone + S-adenosyl-L-homocysteine + H(+). It carries out the reaction 4',7,8-trihydroxyflavone + S-adenosyl-L-methionine = 4',7-dihydroxy-8-methoxyflavone + S-adenosyl-L-homocysteine + H(+). It catalyses the reaction 8-hydroxy-7-methoxyflavone + S-adenosyl-L-methionine = 7,8-dimethoxyflavone + S-adenosyl-L-homocysteine + H(+). Its pathway is flavonoid metabolism. In terms of biological role, flavonoid 8-O-methyltransferase involved in the biosynthesis of polymethoxylated flavonoids natural products such as pebrellin, aroma compounds which contribute to the flavor of peppermint, and exhibit pharmacological activities such as anti-allergic, anti-oxidant, antibacterial, anti-proliferative, and anti-inflammatory effects. Catalyzes S-adenosylmethionine-dependent regioselective 8-O-methylation of flavonoids; active on various hydroxylated flavonoid substrates, including 7,8,3'4'-tetrahydroxy-flavone, 7,8,4'-trihydroxy-flavone and 8-hydroxy-flavone 7-methyl ether. This is 8-hydroxyquercetin 8-O-methyltransferase from Mentha piperita (Peppermint).